The chain runs to 870 residues: MASLTPMMQQYLEIKEQYKDCILFFRLGDFYEMFFSDAEVASRELEITLTGKDCGLEERAPMCGVPFHSADSYIAKLISKGYKVAICEQIEDPALAKGLVKRDVIRIVTPGTVTDSAMLDEKKNNYLMSIYKNKNYYGIACVDLTTGEFLSTHITFGNTFNKLMDEIAKFSPSEIVVNGEFFHDENIKKTLKQRFDVYISGLEDKFFEKEFSIQKVRNYFKDYVIEENAFDLYINASGALLEYLEQTQKVNLSHIQNFNVYRIEEYMILDMATRRNLELTETMREKNRKGSLLWVLDRTMTSMGGRTLRKWIEQPLINLHDIKDRLDAVNEFKERFMIRSEVRELLRAVYDIERLMTKVILGSANCRDLISIKHSIGQVPYIKELLRDLKADLNVLSYNELDTLTDVYEIIDKAIVDDPPVAVKEGGIIKEGFNEEVDRLRSASKDGKKWIAHLESKERERTGIKNLKVGFNKVFGYYIEVTKSYYSQVPDDYIRKQTLANCERYITPELKEIENTVLGAEDRLVELEYQIFVDVRNKVAKEINRLKTTARSLARIDVLCSLAEVADRESYTMPEVTDDDKIEIKDGRHPVVEKIIGQEAFVPNDTYLDMDENQIAIITGPNMAGKSTYMRQVALIVLMAQIGSFVPAKSAKIGIVDRIFTRVGASDDLAAGQSTFMVEMSEVANILGNATSKSLLVLDEIGRGTSTYDGLSIAWAVIEYIGEKIGARTLFATHYHELTELEERIEGIKNYCISVEEKGEDIIFLRKILRGGADNSYGVQVARLAGIPDPVIHRAKEILKKLEDADITRKEKRITRRKQPIEGQIDVFTFNAAQRSYDEVLNELKSLDITTLTPLDAINVLYNLQKKVKG.

Position 620–627 (Gly-620–Ser-627) interacts with ATP.

Belongs to the DNA mismatch repair MutS family.

This protein is involved in the repair of mismatches in DNA. It is possible that it carries out the mismatch recognition step. This protein has a weak ATPase activity. This chain is DNA mismatch repair protein MutS, found in Acetivibrio thermocellus (strain ATCC 27405 / DSM 1237 / JCM 9322 / NBRC 103400 / NCIMB 10682 / NRRL B-4536 / VPI 7372) (Clostridium thermocellum).